The primary structure comprises 656 residues: MADVPADLAAVWPRVLEQLLGEGRGQGVESKDEHWIRRCQPLALVADTALLAVPNEFAKGVLEGRLAPIVSETLSRECGRPIRIAITVDDTAGEPAGPAPQAPQSPPSRPQHRYEEPELPAPGQGGREEYRDRDEYEGYGRNRADQLPTARPAYPQEYQRPEPGSWPRPAQQDDYGWQQQRLGFPERDPYASPNQEPYGQEPPPPYSHENRTSYQQDYRPQPPERPSYDAQRGDYEQARGEYEQPRGDYDKPRGDYDQQRGDYDQRGPRRDLPEPPPGSGHVHRGGPVGPGPATGAPGPLAAQPAPATGPGEPTARLNPKYLFDTFVIGASNRFAHAAAVAVAEAPAKAYNPLFIYGESGLGKTHLLHAIGHYARSLYPGTRVRYVSSEEFTNEFINSIRDGKGDSFRKRYREMDILLVDDIQFLADKESTQEEFFHTFNTLHNANKQIVLSSDRPPKQLVTLEDRLRNRFEWGLITDVQPPELETRIAILRKKAVQEQLNAPPEVLEFIASRISRNIRELEGALIRVTAFASLNRQPVDLGLTEIVLKDLIPGGEDSAPEITSTAIMGATADYFGLTVEDLCGTSRGRALVTARQIAMYLCRELTDLSLPKIGALFGGRDHTTVMHADRKIRNLMAERRSIYNQVTELTNRIKNG.

Positions 1-100 (MADVPADLAA…TAGEPAGPAP (100 aa)) are domain I, interacts with DnaA modulators. The segment at 91–313 (TAGEPAGPAP…PAPATGPGEP (223 aa)) is disordered. The span at 97–109 (GPAPQAPQSPPSR) shows a compositional bias: pro residues. The interval 101 to 315 (QAPQSPPSRP…PATGPGEPTA (215 aa)) is domain II. 2 stretches are compositionally biased toward basic and acidic residues: residues 126 to 144 (GREE…RNRA) and 231 to 273 (QRGD…RDLP). The segment covering 291 to 313 (GPATGAPGPLAAQPAPATGPGEP) has biased composition (low complexity). The segment at 316–532 (RLNPKYLFDT…GALIRVTAFA (217 aa)) is domain III, AAA+ region. Glycine 360, glycine 362, lysine 363, and threonine 364 together coordinate ATP. The tract at residues 533-656 (SLNRQPVDLG…TELTNRIKNG (124 aa)) is domain IV, binds dsDNA.

Belongs to the DnaA family. In terms of assembly, oligomerizes as a right-handed, spiral filament on DNA at oriC.

The protein resides in the cytoplasm. Its function is as follows. Plays an essential role in the initiation and regulation of chromosomal replication. ATP-DnaA binds to the origin of replication (oriC) to initiate formation of the DNA replication initiation complex once per cell cycle. Binds the DnaA box (a 9 base pair repeat at the origin) and separates the double-stranded (ds)DNA. Forms a right-handed helical filament on oriC DNA; dsDNA binds to the exterior of the filament while single-stranded (ss)DNA is stabiized in the filament's interior. The ATP-DnaA-oriC complex binds and stabilizes one strand of the AT-rich DNA unwinding element (DUE), permitting loading of DNA polymerase. After initiation quickly degrades to an ADP-DnaA complex that is not apt for DNA replication. Binds acidic phospholipids. The protein is Chromosomal replication initiator protein DnaA of Streptomyces coelicolor (strain ATCC BAA-471 / A3(2) / M145).